The sequence spans 516 residues: Cytochrome P450 6d1 (516 aa).

A heme-binding site is contributed by Cys-461.

Belongs to the cytochrome P450 family. Requires heme as cofactor.

It is found in the endoplasmic reticulum membrane. The protein resides in the microsome membrane. Functionally, metabolizes pyrethroid insecticides and other xenobiotics. The sequence is that of Cytochrome P450 6d1 (CYP6D1) from Musca domestica (House fly).